A 428-amino-acid polypeptide reads, in one-letter code: MSAFIVLGAQWGDEGKGKMTDYLAENADVVVRFQGGNNAGHTVVVGEKEYKLHLIPSGILYNDKLNVIGNGVVLDPKALFEEINYLESLGVEITPDRLIISDRAHVIMPYHRVLDGIKERARGNKDIGTTGKGIGPSYTDKMERSGIRVCDLIHKEVFEENLKETLEVKNKIITEVFGEEALDYDEIYNEYLGYAEKLRPFVKDISVIVNKKIKDGKEVLFEGAQGTLLDIDYGTYPYVTSSSTIAGGVCIGAGVGPTAITNAVGIAKAYTTRVGKGPFPTELLDSTGDWVREKGHEFGVTTGRARRCGWLDLVILKTSARVSGLTSFAVTKIDTLAGLDTLKVCTGYRLNGEIIDYVPASLEDLAKCKPIYEEFQGWDDSIANARCYKDLPENAIKYLKKIEDFTETKVSIVSVGPKRDQTMIISEI.

GTP contacts are provided by residues glycine 12–lysine 18 and glycine 40–threonine 42. Aspartate 13 acts as the Proton acceptor in catalysis. Positions 13 and 40 each coordinate Mg(2+). Residues aspartate 13–lysine 16, asparagine 38–histidine 41, threonine 130, arginine 144, glutamine 225, threonine 240, and arginine 304 contribute to the IMP site. Histidine 41 functions as the Proton donor in the catalytic mechanism. Valine 300–arginine 306 contributes to the substrate binding site. Residues arginine 306, lysine 332 to aspartate 334, and serine 414 to glycine 416 each bind GTP.

Belongs to the adenylosuccinate synthetase family. In terms of assembly, homodimer. Mg(2+) serves as cofactor.

The protein localises to the cytoplasm. It carries out the reaction IMP + L-aspartate + GTP = N(6)-(1,2-dicarboxyethyl)-AMP + GDP + phosphate + 2 H(+). The protein operates within purine metabolism; AMP biosynthesis via de novo pathway; AMP from IMP: step 1/2. Its function is as follows. Plays an important role in the de novo pathway of purine nucleotide biosynthesis. Catalyzes the first committed step in the biosynthesis of AMP from IMP. The sequence is that of Adenylosuccinate synthetase from Clostridium botulinum (strain 657 / Type Ba4).